We begin with the raw amino-acid sequence, 264 residues long: Phosphonoacetaldehyde hydrolase (264 aa).

The active-site Nucleophile is the Asp10. The Mg(2+) site is built by Asp10 and Ala12. Lys52 (schiff-base intermediate with substrate) is an active-site residue. Asp185 is a Mg(2+) binding site.

The protein belongs to the HAD-like hydrolase superfamily. PhnX family. Homodimer. It depends on Mg(2+) as a cofactor.

The enzyme catalyses phosphonoacetaldehyde + H2O = acetaldehyde + phosphate + H(+). In terms of biological role, involved in phosphonate degradation. This Parabacteroides distasonis (strain ATCC 8503 / DSM 20701 / CIP 104284 / JCM 5825 / NCTC 11152) protein is Phosphonoacetaldehyde hydrolase.